The sequence spans 83 residues: Cytochrome b559 subunit alpha (83 aa).

A helical transmembrane segment spans residues 21–35 (VIHSITIPSLFIAGW). H23 serves as a coordination point for heme.

Belongs to the PsbE/PsbF family. As to quaternary structure, heterodimer of an alpha subunit and a beta subunit. PSII is composed of 1 copy each of membrane proteins PsbA, PsbB, PsbC, PsbD, PsbE, PsbF, PsbH, PsbI, PsbJ, PsbK, PsbL, PsbM, PsbT, PsbX, PsbY, PsbZ, Psb30/Ycf12, at least 3 peripheral proteins of the oxygen-evolving complex and a large number of cofactors. It forms dimeric complexes. Heme b serves as cofactor.

It localises to the plastid. Its subcellular location is the chloroplast thylakoid membrane. In terms of biological role, this b-type cytochrome is tightly associated with the reaction center of photosystem II (PSII). PSII is a light-driven water:plastoquinone oxidoreductase that uses light energy to abstract electrons from H(2)O, generating O(2) and a proton gradient subsequently used for ATP formation. It consists of a core antenna complex that captures photons, and an electron transfer chain that converts photonic excitation into a charge separation. The polypeptide is Cytochrome b559 subunit alpha (Staurastrum punctulatum (Green alga)).